A 200-amino-acid polypeptide reads, in one-letter code: Holliday junction branch migration complex subunit RuvA (200 aa).

The segment at 1-63 is domain I; sequence MIGKLSGKID…EEHIHLYGFL (63 aa). The segment at 64 to 142 is domain II; it reads TLEEKNFFNL…KIFSSSAIIK (79 aa). Positions 142–146 are flexible linker; the sequence is KDSSN. The domain III stretch occupies residues 147-200; the sequence is ISSVEINEVIKALVNLGFTRFEAQNTVQGIITQNTKISIDELIKTALKNRNSSF.

The protein belongs to the RuvA family. As to quaternary structure, homotetramer. Forms an RuvA(8)-RuvB(12)-Holliday junction (HJ) complex. HJ DNA is sandwiched between 2 RuvA tetramers; dsDNA enters through RuvA and exits via RuvB. An RuvB hexamer assembles on each DNA strand where it exits the tetramer. Each RuvB hexamer is contacted by two RuvA subunits (via domain III) on 2 adjacent RuvB subunits; this complex drives branch migration. In the full resolvosome a probable DNA-RuvA(4)-RuvB(12)-RuvC(2) complex forms which resolves the HJ.

Its subcellular location is the cytoplasm. Functionally, the RuvA-RuvB-RuvC complex processes Holliday junction (HJ) DNA during genetic recombination and DNA repair, while the RuvA-RuvB complex plays an important role in the rescue of blocked DNA replication forks via replication fork reversal (RFR). RuvA specifically binds to HJ cruciform DNA, conferring on it an open structure. The RuvB hexamer acts as an ATP-dependent pump, pulling dsDNA into and through the RuvAB complex. HJ branch migration allows RuvC to scan DNA until it finds its consensus sequence, where it cleaves and resolves the cruciform DNA. The sequence is that of Holliday junction branch migration complex subunit RuvA from Rickettsia typhi (strain ATCC VR-144 / Wilmington).